A 366-amino-acid chain; its full sequence is Ferredoxin--NADP reductase, leaf isozyme 2, chloroplastic (366 aa).

The N-terminal 48 residues, 1 to 48 (MAAVNTVSSLPCSKAGAAVAGGAPRPSTCSVFYPPRCWSKRSSGNGVR), are a transit peptide targeting the chloroplast. Residues 87–209 (KEPYTGRCLL…TGPVGKEMLM (123 aa)) enclose the FAD-binding FR-type domain. FAD-binding positions include 145–148 (RLYS), 166–168 (CVK), tyrosine 172, and 183–185 (VCS). Serine 148 and lysine 168 together coordinate NADP(+). An intrachain disulfide couples cysteine 184 to cysteine 189. Serine 185 is modified (phosphoserine). At threonine 216 the chain carries Phosphothreonine. Residue threonine 224 coordinates FAD. Residues threonine 224, 256–257 (VP), 286–287 (SR), lysine 296, 325–326 (GL), and glutamate 364 each bind NADP(+).

This sequence belongs to the ferredoxin--NADP reductase type 1 family. As to quaternary structure, heterodimer with LFNR1. Component of high molecular weight thylakoid LFNRs-containing protein complexes containing LIR1, LFNR1, LFNR2, TIC62 and TROL proteins. Interacts directly with LFNR1 and LFNR2; LIR1 increases the affinity of LFNR1 and LFNR2 for TIC62 and subsequent thylakoid relocalization. FAD is required as a cofactor. Post-translationally, may form interchain disulfide bonds with LIR1.

It localises to the plastid. The protein localises to the chloroplast stroma. It is found in the chloroplast thylakoid membrane. It catalyses the reaction 2 reduced [2Fe-2S]-[ferredoxin] + NADP(+) + H(+) = 2 oxidized [2Fe-2S]-[ferredoxin] + NADPH. It participates in energy metabolism; photosynthesis. Functionally, plays a key role in regulating the relative amounts of cyclic and non-cyclic electron flow to meet the demands of the plant for ATP and reducing power. In Oryza sativa subsp. indica (Rice), this protein is Ferredoxin--NADP reductase, leaf isozyme 2, chloroplastic.